A 359-amino-acid chain; its full sequence is GTP cyclohydrolase FolE2 (359 aa).

Belongs to the GTP cyclohydrolase IV family.

The catalysed reaction is GTP + H2O = 7,8-dihydroneopterin 3'-triphosphate + formate + H(+). The protein operates within cofactor biosynthesis; 7,8-dihydroneopterin triphosphate biosynthesis; 7,8-dihydroneopterin triphosphate from GTP: step 1/1. In terms of biological role, converts GTP to 7,8-dihydroneopterin triphosphate. The chain is GTP cyclohydrolase FolE2 from Cereibacter sphaeroides (strain KD131 / KCTC 12085) (Rhodobacter sphaeroides).